The sequence spans 361 residues: Terpene synthase 6 (361 aa).

The DDxx(x)D/E motif signature appears at 81–86 (DDVLDA). Positions 223 to 231 (NDLVSYEKE) match the NDxxSxxxD/E motif motif.

It belongs to the terpene synthase family.

The catalysed reaction is (2E,6E)-farnesyl diphosphate = (2S,3R,6S,9S)-(-)-protoillud-7-ene + diphosphate. Terpene synthase that converts its substrate farnesyl diphosphate (FPP) into the sesquiterpene (2S,3R,6S,9S)-(-)-protoillud-7-ene. The protein is Terpene synthase 6 of Dictyostelium discoideum (Social amoeba).